The sequence spans 302 residues: Bifunctional protein FolD (302 aa).

Residues 165–167 (GRS), Ser190, and Ile231 contribute to the NADP(+) site.

It belongs to the tetrahydrofolate dehydrogenase/cyclohydrolase family. In terms of assembly, homodimer.

The enzyme catalyses (6R)-5,10-methylene-5,6,7,8-tetrahydrofolate + NADP(+) = (6R)-5,10-methenyltetrahydrofolate + NADPH. It carries out the reaction (6R)-5,10-methenyltetrahydrofolate + H2O = (6R)-10-formyltetrahydrofolate + H(+). The protein operates within one-carbon metabolism; tetrahydrofolate interconversion. Its function is as follows. Catalyzes the oxidation of 5,10-methylenetetrahydrofolate to 5,10-methenyltetrahydrofolate and then the hydrolysis of 5,10-methenyltetrahydrofolate to 10-formyltetrahydrofolate. This is Bifunctional protein FolD from Prochlorococcus marinus (strain SARG / CCMP1375 / SS120).